Consider the following 333-residue polypeptide: 4-hydroxy-2-oxovalerate aldolase (333 aa).

A Pyruvate carboxyltransferase domain is found at 3-253 (ILINDSTLRD…NTGIDLYHFL (251 aa)). Position 11–12 (11–12 (RD)) interacts with substrate. Aspartate 12 serves as a coordination point for Mn(2+). Histidine 15 acts as the Proton acceptor in catalysis. Residues serine 165 and histidine 192 each contribute to the substrate site. The Mn(2+) site is built by histidine 192 and histidine 194.

Belongs to the 4-hydroxy-2-oxovalerate aldolase family. In terms of assembly, interacts with MhpF.

It carries out the reaction (S)-4-hydroxy-2-oxopentanoate = acetaldehyde + pyruvate. The protein operates within aromatic compound metabolism; 3-phenylpropanoate degradation. Functionally, catalyzes the retro-aldol cleavage of 4-hydroxy-2-oxopentanoate to pyruvate and acetaldehyde. Is involved in the meta-cleavage pathway for the degradation of aromatic compounds. This chain is 4-hydroxy-2-oxovalerate aldolase, found in Serratia proteamaculans (strain 568).